The primary structure comprises 389 residues: Heat-inducible transcription repressor HrcA (389 aa).

The protein belongs to the HrcA family.

Functionally, negative regulator of class I heat shock genes (grpE-dnaK-dnaJ and groELS operons). Prevents heat-shock induction of these operons. The chain is Heat-inducible transcription repressor HrcA from Synechococcus sp. (strain JA-2-3B'a(2-13)) (Cyanobacteria bacterium Yellowstone B-Prime).